A 190-amino-acid chain; its full sequence is Iron-sulfur protein (190 aa).

Residues 8–36 form the 4Fe-4S ferredoxin-type 1 domain; sequence VIIYANPDHCLSCHSCELACAVAHSGGHD. The [4Fe-4S] cluster site is built by Cys17, Cys20, Cys23, Cys27, Cys65, Cys68, Cys73, Cys77, Cys96, Cys99, Cys102, Cys106, Cys133, Cys136, Cys150, and Cys154. 4Fe-4S ferredoxin-type domains are found at residues 87–116 and 133–164; these read GQVQ…VRSE and CDLC…MVDL.

The carbon monoxide dehydrogenase (CODH) oxidizes carbon monoxide coupled, via CooF, to the reduction of a hydrogen cation by a hydrogenase (probably CooH). CooF is required in stoichiometric amounts in vitro for anchoring CODH to the membrane as well as for conveying the electrons to the hydrogenase. In Rhodospirillum rubrum, this protein is Iron-sulfur protein (cooF).